The following is a 256-amino-acid chain: Nuclear shuttle protein (256 aa).

A disordered region spans residues 18–50 (VSRNQSSKRGTFVRRTDGKRRKGPSSKAHDEPK). Positions 21–42 (NQSSKRGTFVRRTDGKRRKGPS) match the Bipartite nuclear localization signal motif. Positions 81 to 96 (VLGKIEPNRSRSYIKL) match the Nuclear localization signal motif. The interaction with Arabidopsis thaliana NSI protein stretch occupies residues 150-187 (EIFGARIHSHGNLAITPGLKDRYYVLHVLKRVLSVEKD).

This sequence belongs to the begomovirus nuclear shuttle protein family. In terms of assembly, binds to single-stranded and double-stranded viral DNA. Interacts with the host nuclear shuttle interacting (NSI) protein. This interaction may allow NSP to recruit NSI monomers to the viral genome and thus regulate nuclear export of viral genome by NSP.

It localises to the host nucleus. Its subcellular location is the host cytoplasm. It is found in the host cell membrane. Binds to the genomic viral ssDNA, shuttles it into and out of the cell nucleus. Begomoviruses use 2 proteins to transport their DNA from cell to cell. The nuclear shuttle protein (NSP) shuttles it between nucleus and cytoplasm and the movement protein (MP) probably transports the DNA-NSP complex to the cell periphery and facilitates movement across the cell wall. The chain is Nuclear shuttle protein from Brassica oleracea (Wild cabbage).